The primary structure comprises 375 residues: UDP-4-amino-4,6-dideoxy-N-acetyl-beta-L-altrosamine transaminase (375 aa).

Substrate contacts are provided by residues Tyr-6, 26–29, Ala-56, and Ser-178; that span reads KQLT. The residue at position 183 (Lys-183) is an N6-(pyridoxal phosphate)lysine. Residues Asn-228 and 313–316 contribute to the substrate site; that span reads QVHY.

This sequence belongs to the DegT/DnrJ/EryC1 family.

It catalyses the reaction UDP-4-amino-4,6-dideoxy-N-acetyl-beta-L-altrosamine + 2-oxoglutarate = UDP-2-acetamido-2,6-dideoxy-beta-L-arabino-hex-4-ulose + L-glutamate. Catalyzes the second step in the biosynthesis of pseudaminic acid, a sialic-acid-like sugar that is used to modify flagellin. Uses UDP-2-acetamido-2,6-dideoxy-beta-L-arabino-4-hexulose as substrate producing UDP-4-amino-4,6-dideoxy-beta-L-AltNAc. This chain is UDP-4-amino-4,6-dideoxy-N-acetyl-beta-L-altrosamine transaminase (pseC), found in Helicobacter pylori (strain ATCC 700392 / 26695) (Campylobacter pylori).